Consider the following 119-residue polypeptide: MARVKGGVVSRKRRKRILKLAKGYYGAKHILFRTAKEQVMNSYYYAYRDRRQKKRDFRKLWITRINAAARMNGLSYSQLMHGLKLAEIEVNRKMLADLAVNDAAAFTALADAAKAKLGK.

This sequence belongs to the bacterial ribosomal protein bL20 family.

Its function is as follows. Binds directly to 23S ribosomal RNA and is necessary for the in vitro assembly process of the 50S ribosomal subunit. It is not involved in the protein synthesizing functions of that subunit. In Streptococcus equi subsp. equi (strain 4047), this protein is Large ribosomal subunit protein bL20.